The sequence spans 395 residues: General transcription factor IIH subunit 2 (395 aa).

The VWFA domain maps to 60-236; it reads HLYVVVDGSR…HYKELLTHHV (177 aa). Position 95 is a phosphotyrosine (Y95). A C4-type zinc finger spans residues 291–308; sequence CPQCRAKYCELPVECKIC.

It belongs to the GTF2H2 family. As to quaternary structure, component of the TFIID-containing RNA polymerase II pre-initiation complex that is composed of TBP and at least GTF2A1, GTF2A2, GTF2E1, GTF2E2, GTF2F1, GTF2H2, GTF2H3, GTF2H4, GTF2H5, GTF2B, TCEA1, ERCC2 and ERCC3. Component of the 7-subunit TFIIH core complex composed of XPB/ERCC3, XPD/ERCC2, GTF2H1, GTF2H2, GTF2H3, GTF2H4 and GTF2H5, which is active in NER. The core complex associates with the 3-subunit CDK-activating kinase (CAK) module composed of CCNH/cyclin H, CDK7 and MNAT1 to form the 10-subunit holoenzyme (holo-TFIIH) active in transcription. Interacts with XPB, XPD, GTF2H1 and GTF2H3.

It is found in the nucleus. Its function is as follows. Component of the general transcription and DNA repair factor IIH (TFIIH) core complex, which is involved in general and transcription-coupled nucleotide excision repair (NER) of damaged DNA and, when complexed to CAK, in RNA transcription by RNA polymerase II. In NER, TFIIH acts by opening DNA around the lesion to allow the excision of the damaged oligonucleotide and its replacement by a new DNA fragment. In transcription, TFIIH has an essential role in transcription initiation. When the pre-initiation complex (PIC) has been established, TFIIH is required for promoter opening and promoter escape. Phosphorylation of the C-terminal tail (CTD) of the largest subunit of RNA polymerase II by the kinase module CAK controls the initiation of transcription. The N-terminus of GTF2H2 interacts with and regulates XPD whereas an intact C-terminus is required for a successful escape of RNAP II form the promoter. This Bos taurus (Bovine) protein is General transcription factor IIH subunit 2 (GTF2H2).